Consider the following 418-residue polypeptide: UDP-N-acetylglucosamine 1-carboxyvinyltransferase (418 aa).

A phosphoenolpyruvate-binding site is contributed by 22-23; the sequence is KN. Arg-92 provides a ligand contact to UDP-N-acetyl-alpha-D-glucosamine. Catalysis depends on Cys-116, which acts as the Proton donor. Cys-116 carries the post-translational modification 2-(S-cysteinyl)pyruvic acid O-phosphothioketal. UDP-N-acetyl-alpha-D-glucosamine is bound by residues Asp-306 and Ile-328.

Belongs to the EPSP synthase family. MurA subfamily.

The protein resides in the cytoplasm. It catalyses the reaction phosphoenolpyruvate + UDP-N-acetyl-alpha-D-glucosamine = UDP-N-acetyl-3-O-(1-carboxyvinyl)-alpha-D-glucosamine + phosphate. It functions in the pathway cell wall biogenesis; peptidoglycan biosynthesis. Its function is as follows. Cell wall formation. Adds enolpyruvyl to UDP-N-acetylglucosamine. The polypeptide is UDP-N-acetylglucosamine 1-carboxyvinyltransferase (Solibacter usitatus (strain Ellin6076)).